Reading from the N-terminus, the 98-residue chain is YcgL domain-containing protein CJA_2437 (98 aa).

The region spanning 3–87 (IIAEIYRSPK…RDLVDAEAKR (85 aa)) is the YcgL domain.

This chain is YcgL domain-containing protein CJA_2437, found in Cellvibrio japonicus (strain Ueda107) (Pseudomonas fluorescens subsp. cellulosa).